We begin with the raw amino-acid sequence, 202 residues long: 3-isopropylmalate dehydratase small subunit 1 (202 aa).

It belongs to the LeuD family. LeuD type 1 subfamily. In terms of assembly, heterodimer of LeuC and LeuD.

The enzyme catalyses (2R,3S)-3-isopropylmalate = (2S)-2-isopropylmalate. It participates in amino-acid biosynthesis; L-leucine biosynthesis; L-leucine from 3-methyl-2-oxobutanoate: step 2/4. Functionally, catalyzes the isomerization between 2-isopropylmalate and 3-isopropylmalate, via the formation of 2-isopropylmaleate. This Mannheimia succiniciproducens (strain KCTC 0769BP / MBEL55E) protein is 3-isopropylmalate dehydratase small subunit 1.